We begin with the raw amino-acid sequence, 439 residues long: MATKHEQILTYIDSLPVGEKISVRRIAKEMKVSEGTAYRAIKEAENKGFVSTIERVGTIRIEQKKKENIEKLTYAEVVNVIDGQVLGGRAGLHKTLNKFVIGAMELDAMMRYTAAGNLLIVGNRINAHRQALEAGAAVLVTGGFNTDDSIVQLADELELPILSTSYDTFTVAAMINRAIYDQLIKKEIVLVEDILTPADRTVYLSPKDKLEKWYEKNFETGHGRFPVVDDQMKIHGILTSKDIAGHDRNASIEKVMTKNPVTVIGKTSVASAAQMMVWEGIEVLPVTDGHQKLIGMISRQDVLKALQMIQKQPQVGEKLDDIVSRGFKDEGDDKEDQTVYEYEVTPQMTNQLGTISYGVFTTILTQAANRFLRSKKRGELVIESITIFFLKPVQMESVIEVKPRILEAGRKFGKMEVEVHSQGHIVSKAMLMVQLMERS.

2 consecutive CBS domains span residues 195–254 and 256–314; these read LTPA…SIEK and MTKN…KQPQ.

This is an uncharacterized protein from Bacillus subtilis (strain 168).